The following is a 353-amino-acid chain: Ion-translocating oxidoreductase complex subunit D (353 aa).

The next 4 helical transmembrane spans lie at 20–40 (IMLL…YYFG), 44–64 (IIQV…ILHL), 77–108 (SALL…AIII), and 123–143 (PAMV…TSWL). Thr187 is modified (FMN phosphoryl threonine). 4 helical membrane passes run 214–234 (VIAG…GVFL), 242–262 (WHIP…GWLL), 267–287 (LVTP…FFIA), and 301–318 (LLYG…RSYG).

This sequence belongs to the NqrB/RnfD family. In terms of assembly, the complex is composed of six subunits: RnfA, RnfB, RnfC, RnfD, RnfE and RnfG. FMN is required as a cofactor.

The protein resides in the cell inner membrane. Part of a membrane-bound complex that couples electron transfer with translocation of ions across the membrane. In Erwinia tasmaniensis (strain DSM 17950 / CFBP 7177 / CIP 109463 / NCPPB 4357 / Et1/99), this protein is Ion-translocating oxidoreductase complex subunit D.